The following is a 229-amino-acid chain: PKHD-type hydroxylase RPD_3334 (229 aa).

In terms of domain architecture, Fe2OG dioxygenase spans 78 to 180 (QIFPPLFNRY…RVASFFWLQS (103 aa)). Fe cation contacts are provided by H98, D100, and H161. R171 serves as a coordination point for 2-oxoglutarate.

Fe(2+) serves as cofactor. L-ascorbate is required as a cofactor.

The protein is PKHD-type hydroxylase RPD_3334 of Rhodopseudomonas palustris (strain BisB5).